The following is a 700-amino-acid chain: MPSDILVVAALGRPFTLGMLYDARNDKLIPGFTLWEDEVIEESTLESSQPSSAFEIIASDSTDDKSSLMDIEASLKASFLGGLVEVGGSAKYLNNQKKFKNQSRVTLQYKATTSFKQLMTNLGTKHVEYSELFENIQATHVVIGILYGANAFFVFDSNKVDSTNVQEIQGQMEAVIKKIPSVEISGKASVQLTGEETDITNSFSCEFHGDFFLTTNPTTFEDAVKTYQQLPQMMGKDNAVPMTVWLVPMVNFYSEAPQLMADSSTPILRKVRNTLEAIVQVQMRCNDALDDPTVNLFTEVQKKLSDFQKICDDHMSKLQATIAKKLFAIRSGDEDESALLNLFEENLQSPFNIESLNMWMEFEEREINVLRSCMDILTKAKPKVIFNQGVLFKGLYDSKVKHALCYVFTNVTKNDVFLNVLNEFLDSPQSRPKKLRPSPKDYWYSYDDIPETMREKAYLFRNLAKEMNNRCVHFFVTAIHNPKQEGAGIHYYRESIQIIDEFTKPYMPGVESIKDRRELQWYDCELTLDPETAHQVLTLSEGNKKAVSGNTKSPTDHLEKFSHFQQVMCTKGLSGRHYWELEWSGYVGAGVTYKGIGRKTSTSDSSLGKNEKSWLFEYSTKSGYQQIHNSKKTRVTVSSTGFKLLGVYLDWPAGTLSFYMVNKAWVTHLHTFHTKFNEAVYPAFLIGDAQQKVNGQIKLL.

A structural MACPF/CDC pore-forming domain region spans residues Pro-2–Ser-264. The interval Thr-265 to Val-384 is structural FAT domain. Residues Ile-385–Lys-514 form a thioredoxin (THX) domain region. Positions Tyr-506 to Leu-700 constitute a B30.2/SPRY domain.

Belongs to the SNTX/VTX toxin family. In terms of assembly, heterodimer of alpha and beta subunits; non-covalently linked. Post-translationally, intrachain disulfide bonds may be present in the heterodimer. In terms of processing, not glycosylated. In terms of tissue distribution, expressed by the venom gland.

It is found in the secreted. This lethal (towards mammals) heterodimer induces hemolytic activities due to its ability to form pores in the cell membrane. The pore may be composed of 10 SNTX-alpha/beta heterodimers. The toxin elicits potent hypotension which is endothelium-dependent and appears to be mediated by the nitric oxide pathway and activation of potassium channels. In addition, it displays edema-inducing activities, increases vascular permeability. It also shows myotoxic activities and interferes irreversibly with neuromuscular function. It also induces irreversible platelet aggregation in rabbit or rat but not in human or mouse whole blood. In addition, it has been observed to increase spontaneous quantal acetylcholine release from isolated frog cutaneous pectoris motor endings. This Synanceia horrida (Estuarine stonefish) protein is Stonustoxin subunit beta.